The primary structure comprises 309 residues: Malate dehydrogenase (309 aa).

Residues 8–13 (GAGLVG) and D33 each bind NAD(+). The substrate site is built by R82 and R88. NAD(+) contacts are provided by residues N95 and 118–120 (VSN). Residues N120 and R151 each contribute to the substrate site. Residue H175 is the Proton acceptor of the active site.

Belongs to the LDH/MDH superfamily. MDH type 3 family.

The enzyme catalyses (S)-malate + NAD(+) = oxaloacetate + NADH + H(+). Its function is as follows. Catalyzes the reversible oxidation of malate to oxaloacetate. The protein is Malate dehydrogenase of Pseudomonas putida (strain GB-1).